A 232-amino-acid chain; its full sequence is Dehydrin DHN3 (232 aa).

A compositionally biased stretch (polar residues) spans 1 to 14; that stretch reads MSQYQNQYGAQTGM. Disordered stretches follow at residues 1–66 and 140–232; these read MSQY…QHRG and EHHG…CTGH. Positions 49 to 60 are enriched in gly residues; the sequence is TTGGATGQGHGH. The span at 140–157 shows a compositional bias: basic and acidic residues; it reads EHHGDKKGVMDKIKEKIP. Positions 159–168 are enriched in polar residues; the sequence is TEQSRTNTDG. The segment covering 198–223 has biased composition (basic and acidic residues); sequence EQQDVHHGDEQHGEKKGIMEKIKEKL.

Belongs to the plant dehydrin family.

The sequence is that of Dehydrin DHN3 (DHN3) from Pisum sativum (Garden pea).